A 337-amino-acid polypeptide reads, in one-letter code: MVEVERVRYSDTLEREKIRAMIKARKEKQKEQTVENEKAVCPECGSRNLVHDYERAELVCGDCGLVIDADFVDEGPEWRAFDHDQRMKRSRVGAPMTYTIHDKGLSTMIDWRNRDSYGKSISSKNRAQLYRLRKWQRRIRVSNATERNLAFALSELDRMASALGLPRTVRETAAVVYRKAVDKNLIRGRSIEGVAAAALYAACRQCSVPRTLDEIEEVSRVSRKEIGRTYRFISRELALKLMPTSPIDYVPRFCSGLNLKGEVQSKSVEILRQASEKELTSGRGPTGVAAAAIYIASILCGERRTQREVADVAGVTEVTIRNRYKELAEELDIEIIL.

A TFIIB-type zinc finger spans residues 37 to 68; it reads EKAVCPECGSRNLVHDYERAELVCGDCGLVID. Zn(2+)-binding residues include cysteine 41, cysteine 44, cysteine 60, and cysteine 63. A run of 2 repeats spans residues 154–237 and 248–329.

It belongs to the TFIIB family.

Functionally, stabilizes TBP binding to an archaeal box-A promoter. Also responsible for recruiting RNA polymerase II to the pre-initiation complex (DNA-TBP-TFIIB). This chain is Transcription initiation factor IIB, found in Methanosarcina mazei (Methanosarcina frisia).